A 1148-amino-acid polypeptide reads, in one-letter code: Putative transcription factor SEF1 (1148 aa).

Residues 1 to 51 are disordered; it reads MVKDNRDSDQDQDFSSAHMKRQPEQQQLQQHQFPSKKQRISHHDDSHQINH. Serine 8 is subject to Phosphoserine. Positions 57 to 87 form a DNA-binding region, zn(2)-C6 fungal-type; sequence CTHCRQHKIKCDASQNFPHPCSRCEKIGLHC. Residues 148–180 are disordered; the sequence is PTPGTIIPNPDSSPSSGSPTSSAAQRDSKVSVQ. The segment covering 150–169 has biased composition (low complexity); sequence PGTIIPNPDSSPSSGSPTSS. Serine 263 is modified (phosphoserine). Residues 524–550 form a disordered region; it reads EESEEDNNDSIDNNNNDKRNKKDEPHV. The span at 538 to 550 shows a compositional bias: basic and acidic residues; it reads NNDKRNKKDEPHV. A Phosphoserine modification is found at serine 806. Residues 1029-1050 are compositionally biased toward polar residues; that stretch reads RSQSSMSHSRTPIASKSNNMTD. The disordered stretch occupies residues 1029-1063; that stretch reads RSQSSMSHSRTPIASKSNNMTDLHSVVSDPGSSKS.

It is found in the nucleus. Its function is as follows. Putative transcription factor that seems to be involved in the sporulation process. Suppresses the lethal phenotype of RPM2 deletion. This Saccharomyces cerevisiae (strain ATCC 204508 / S288c) (Baker's yeast) protein is Putative transcription factor SEF1 (SEF1).